We begin with the raw amino-acid sequence, 417 residues long: Lipoyl synthase, mitochondrial (417 aa).

The transit peptide at M1 to F30 directs the protein to the mitochondrion. A disordered region spans residues S23 to G62. 2 stretches are compositionally biased toward polar residues: residues F30–V41 and P51–A61. Positions 132, 137, 143, 163, 167, 170, and 378 each coordinate [4Fe-4S] cluster. Residues G146–L367 form the Radical SAM core domain.

It belongs to the radical SAM superfamily. Lipoyl synthase family. It depends on [4Fe-4S] cluster as a cofactor.

It is found in the mitochondrion. It carries out the reaction [[Fe-S] cluster scaffold protein carrying a second [4Fe-4S](2+) cluster] + N(6)-octanoyl-L-lysyl-[protein] + 2 oxidized [2Fe-2S]-[ferredoxin] + 2 S-adenosyl-L-methionine + 4 H(+) = [[Fe-S] cluster scaffold protein] + N(6)-[(R)-dihydrolipoyl]-L-lysyl-[protein] + 4 Fe(3+) + 2 hydrogen sulfide + 2 5'-deoxyadenosine + 2 L-methionine + 2 reduced [2Fe-2S]-[ferredoxin]. It functions in the pathway protein modification; protein lipoylation via endogenous pathway; protein N(6)-(lipoyl)lysine from octanoyl-[acyl-carrier-protein]: step 2/2. Catalyzes the radical-mediated insertion of two sulfur atoms into the C-6 and C-8 positions of the octanoyl moiety bound to the lipoyl domains of lipoate-dependent enzymes, thereby converting the octanoylated domains into lipoylated derivatives. This is Lipoyl synthase, mitochondrial from Pyrenophora tritici-repentis (strain Pt-1C-BFP) (Wheat tan spot fungus).